We begin with the raw amino-acid sequence, 247 residues long: Ribosomal RNA large subunit methyltransferase E (247 aa).

Residues Gly-99, Trp-101, Asp-123, Asp-139, and Asp-162 each coordinate S-adenosyl-L-methionine. Catalysis depends on Lys-202, which acts as the Proton acceptor.

It belongs to the class I-like SAM-binding methyltransferase superfamily. RNA methyltransferase RlmE family.

It is found in the cytoplasm. The catalysed reaction is uridine(2552) in 23S rRNA + S-adenosyl-L-methionine = 2'-O-methyluridine(2552) in 23S rRNA + S-adenosyl-L-homocysteine + H(+). Its function is as follows. Specifically methylates the uridine in position 2552 of 23S rRNA at the 2'-O position of the ribose in the fully assembled 50S ribosomal subunit. The protein is Ribosomal RNA large subunit methyltransferase E of Anaplasma phagocytophilum (strain HZ).